The primary structure comprises 114 residues: Ig heavy chain V region GOM (114 aa).

The Ig-like domain occupies 1-112 (EVQLVESGGD…YWGQGTLVTV (112 aa)).

The polypeptide is Ig heavy chain V region GOM (Canis lupus familiaris (Dog)).